The primary structure comprises 120 residues: Ribosome-binding factor A (120 aa).

The protein belongs to the RbfA family. In terms of assembly, monomer. Binds 30S ribosomal subunits, but not 50S ribosomal subunits or 70S ribosomes.

It is found in the cytoplasm. One of several proteins that assist in the late maturation steps of the functional core of the 30S ribosomal subunit. Associates with free 30S ribosomal subunits (but not with 30S subunits that are part of 70S ribosomes or polysomes). Required for efficient processing of 16S rRNA. May interact with the 5'-terminal helix region of 16S rRNA. This is Ribosome-binding factor A from Borreliella burgdorferi (strain ATCC 35210 / DSM 4680 / CIP 102532 / B31) (Borrelia burgdorferi).